A 479-amino-acid chain; its full sequence is U3 snoRNP-associated protein-like EMB2271 (479 aa).

The interval methionine 1–lysine 73 is disordered. Residues glycine 8 to lysine 17 show a composition bias toward basic residues. Residues serine 18–tyrosine 38 show a composition bias toward basic and acidic residues. Over residues aspartate 39–glutamate 51 the composition is skewed to acidic residues. Residues glutamate 52–lysine 73 show a composition bias toward basic and acidic residues. WD repeat units lie at residues lysine 143–tyrosine 182, arginine 204–alanine 243, glycine 246–serine 285, glycine 288–tyrosine 326, alanine 328–isoleucine 366, proline 386–glutamine 425, and proline 431–valine 471.

It belongs to the WD repeat RRP9 family.

Its subcellular location is the nucleus. The protein resides in the nucleolus. Component of a nucleolar small nuclear ribonucleoprotein particle (snoRNP) thought to participate in the processing and modification of pre-ribosomal RNA. Essential for embryogenesis. May function during late embryogenesis. This Arabidopsis thaliana (Mouse-ear cress) protein is U3 snoRNP-associated protein-like EMB2271.